The following is a 529-amino-acid chain: VIN3-like protein 3 (529 aa).

A Nuclear localization signal motif is present at residues 97–104; the sequence is PKRQKRDL. Residues 137–207 form a PHD-type zinc finger; sequence RCSCCICFKY…CFNCVSCGKT (71 aa). The Nuclear localization signal signature appears at 214 to 221; that stretch reads LKKQLIIA. The Fibronectin type-III domain maps to 312-411; sequence GSMKIRIESV…FIVSTKTLQD (100 aa). The interval 421–529 is VIN3-Interacting Domain (VID); the sequence is MSNCNNANKM…AGVSLILLQD (109 aa).

In terms of assembly, interacts with VIN3.

The protein localises to the nucleus. Functionally, involved in both the vernalization and photoperiod pathways by regulating gene expression. This is VIN3-like protein 3 (VIL3) from Arabidopsis thaliana (Mouse-ear cress).